The chain runs to 620 residues: Chaperone protein HscA homolog (620 aa).

The protein belongs to the heat shock protein 70 family.

Chaperone involved in the maturation of iron-sulfur cluster-containing proteins. Has a low intrinsic ATPase activity which is markedly stimulated by HscB. The protein is Chaperone protein HscA homolog of Pseudomonas fluorescens (strain SBW25).